We begin with the raw amino-acid sequence, 383 residues long: L-lactate dehydrogenase (383 aa).

Positions 1–380 (MIISSTFDYR…THESLASTDA (380 aa)) constitute an FMN hydroxy acid dehydrogenase domain. Residue Y24 participates in substrate binding. Residues S106 and Q127 each coordinate FMN. Position 129 (Y129) interacts with substrate. T155 is a binding site for FMN. Residue R164 coordinates substrate. K251 is a binding site for FMN. H275 acts as the Proton acceptor in catalysis. R278 contacts substrate. Residue 306–330 (DSGVRSGLDVVRMIAQGADAVMIGR) coordinates FMN.

It belongs to the FMN-dependent alpha-hydroxy acid dehydrogenase family. FMN is required as a cofactor.

The protein localises to the cell inner membrane. It catalyses the reaction (S)-lactate + A = pyruvate + AH2. Functionally, catalyzes the conversion of L-lactate to pyruvate. Is coupled to the respiratory chain. The chain is L-lactate dehydrogenase from Bartonella quintana (strain Toulouse) (Rochalimaea quintana).